We begin with the raw amino-acid sequence, 591 residues long: DDB1- and CUL4-associated factor 8 (591 aa).

The segment covering 1-25 (MSNKRPNTTDGRTDLANGSLSSSPE) has biased composition (polar residues). Residues 1 to 140 (MSNKRPNTTD…EDWVSSETTA (140 aa)) form a disordered region. Phosphoserine occurs at positions 22 and 23. The Nuclear export signal motif lies at 40 to 51 (IEVEASDLSLSL). Basic and acidic residues-rich tracts occupy residues 66–100 (RGTDTESSGEEKDSDSMEDTGHYSINDESRGHGHS) and 118–131 (SRDQDSSDDERALE). 3 positions are modified to phosphoserine: Ser100, Ser123, and Ser124. 7 WD repeats span residues 185-224 (GHTGCVNTLHFNQRGTWLASGSDDLKVVVWDWVRRQPVLD), 228-269 (GHKS…CCKN), 275-315 (QHKG…PASK), 323-363 (EKKV…ENEN), 379-418 (ESKANITCLVYSHDGTELLASYNDEDIYLFNSSHSDGAQY), 426-466 (RNNA…IIQF), and 470-509 (DKGGVVNCLEPHPHLPVLATSGLDHDVKIWAPTAEASTEL). Position 198 is an omega-N-methylarginine; by PRMT1 (Arg198). Positions 552–591 (HRRWREPGVGATDADSDESPSSSDTSDEEEGPDRVQCMPS) are disordered.

The protein belongs to the WD repeat DCAF8 family. In terms of assembly, interacts with DDB1, CUL4A and CUL4B. Interacts with KPNA1, KPNB1 and XPO1. Expressed in the brain.

It localises to the nucleus. The protein localises to the cytoplasm. The protein operates within protein modification; protein ubiquitination. In terms of biological role, may function as a substrate receptor for CUL4-DDB1 E3 ubiquitin-protein ligase complex. The sequence is that of DDB1- and CUL4-associated factor 8 (Dcaf8) from Mus musculus (Mouse).